Consider the following 374-residue polypeptide: Ferroptosis suppressor protein 1 (374 aa).

The N-myristoyl glycine moiety is linked to residue Gly-2. The helical transmembrane segment at 13 to 35 (VVIVGGGFAGIAAATQLKSFGIP) threads the bilayer. 6-hydroxy-FAD is bound by residues 17-21 (GGGFA), Arg-53, and Val-81. Position 167 is an N6-acetyllysine (Lys-167). Position 285 (Asp-285) interacts with 6-hydroxy-FAD.

The protein belongs to the FAD-dependent oxidoreductase family. It depends on 6-hydroxy-FAD as a cofactor. In terms of processing, N-myristoylation at Gly-2 mediates the recruitment to lipid droplets and plasma membrane. Post-translationally, acetylation at Lys-167 prevents AIFM2 ubiquitination and degradation, thereby inhibiting ferroptosis. KAT2B mediates acetylation at Lys-167, while HDAC3 removes it. Ubiquitinated. AIFM2 undergoes 'Lys-29'-ubiquitination and proteasomal degradation, which is inhibited by acetylation at Lys-167.

It localises to the lipid droplet. The protein localises to the cell membrane. The protein resides in the cytoplasm. Its subcellular location is the mitochondrion membrane. It is found in the nucleus. It catalyses the reaction ubiquinone-10 + NADH + H(+) = ubiquinol-10 + NAD(+). The enzyme catalyses phylloquinone + NADH + H(+) = phylloquinol + NAD(+). The catalysed reaction is menaquinone-4 + NADH + H(+) = menaquinol-4 + NAD(+). It carries out the reaction menadione + NADH + H(+) = menadiol + NAD(+). The modification by 4-hydroxy-2-nonenal (HNE) adduction in mitochondria results in loss of the oxidoreductase activity and activation of a novel function in mitochondrial oxidative stress signaling. In terms of biological role, a NAD(P)H-dependent oxidoreductase that acts as a key inhibitor of ferroptosis. At the plasma membrane, catalyzes reduction of coenzyme Q/ubiquinone-10 to ubiquinol-10, a lipophilic radical-trapping antioxidant that prevents lipid oxidative damage and consequently ferroptosis. Acts in parallel to GPX4 to suppress phospholipid peroxidation and ferroptosis. This anti-ferroptotic function is independent of cellular glutathione levels. Also acts as a potent radical-trapping antioxidant by mediating warfarin-resistant vitamin K reduction in the canonical vitamin K cycle: catalyzes NAD(P)H-dependent reduction of vitamin K (phylloquinone, menaquinone-4 and menadione) to hydroquinone forms. Hydroquinones act as potent radical-trapping antioxidants inhibitor of phospholipid peroxidation and ferroptosis. May play a role in mitochondrial stress signaling. Upon oxidative stress, associates with the lipid peroxidation end product 4-hydroxy-2-nonenal (HNE) forming a lipid adduct devoid of oxidoreductase activity, which then translocates from mitochondria into the nucleus triggering DNA damage and cell death. This Xenopus tropicalis (Western clawed frog) protein is Ferroptosis suppressor protein 1 (aifm2).